Reading from the N-terminus, the 427-residue chain is Cyclic 2,3-diphosphoglycerate synthetase (427 aa).

This sequence belongs to the cyclic 2,3-diphosphoglycerate synthetase family.

The protein localises to the cytoplasm. The catalysed reaction is (2R)-2,3-bisphosphoglycerate + ATP + H(+) = cyclic (2R)-2,3-bisphosphoglycerate + ADP + phosphate. In terms of biological role, catalyzes the formation of cyclic 2,3-diphosphoglycerate (cDPG) by formation of an intramolecular phosphoanhydride bond at the expense of ATP. This chain is Cyclic 2,3-diphosphoglycerate synthetase, found in Pyrococcus abyssi (strain GE5 / Orsay).